We begin with the raw amino-acid sequence, 536 residues long: CTP synthase (536 aa).

Positions 1 to 267 (MSKFVFVTGG…CKQTLNCLEL (267 aa)) are amidoligase domain. CTP is bound at residue serine 13. Serine 13 contacts UTP. Residues 14 to 19 (SIGKGI) and aspartate 71 each bind ATP. Mg(2+) contacts are provided by aspartate 71 and glutamate 141. CTP is bound by residues 148–150 (DIE), 188–193 (KTKPTQ), and lysine 224. UTP is bound by residues 188 to 193 (KTKPTQ) and lysine 224. In terms of domain architecture, Glutamine amidotransferase type-1 spans 292–534 (KVALVGKYIE…IKASQEKLEQ (243 aa)). Residue glycine 354 participates in L-glutamine binding. Cysteine 381 (nucleophile; for glutamine hydrolysis) is an active-site residue. Residues 382-385 (LGMQ), glutamate 405, and arginine 462 contribute to the L-glutamine site. Residues histidine 507 and glutamate 509 contribute to the active site.

The protein belongs to the CTP synthase family. Homotetramer.

It carries out the reaction UTP + L-glutamine + ATP + H2O = CTP + L-glutamate + ADP + phosphate + 2 H(+). The catalysed reaction is L-glutamine + H2O = L-glutamate + NH4(+). It catalyses the reaction UTP + NH4(+) + ATP = CTP + ADP + phosphate + 2 H(+). The protein operates within pyrimidine metabolism; CTP biosynthesis via de novo pathway; CTP from UDP: step 2/2. Allosterically activated by GTP, when glutamine is the substrate; GTP has no effect on the reaction when ammonia is the substrate. The allosteric effector GTP functions by stabilizing the protein conformation that binds the tetrahedral intermediate(s) formed during glutamine hydrolysis. Inhibited by the product CTP, via allosteric rather than competitive inhibition. Catalyzes the ATP-dependent amination of UTP to CTP with either L-glutamine or ammonia as the source of nitrogen. Regulates intracellular CTP levels through interactions with the four ribonucleotide triphosphates. This chain is CTP synthase, found in Prochlorococcus marinus subsp. pastoris (strain CCMP1986 / NIES-2087 / MED4).